The following is a 125-amino-acid chain: Flagellar protein FliT (125 aa).

The tract at residues 1-50 (MDNKMDLLSAYQRILSLSEQMLNLAKNEKWDELVDMEITYLKAVEVISHS) is required for homodimerization. The fliD binding stretch occupies residues 60–98 (LQQKMTNILQIILDNENEIKKLLQKRLDELSKLIKQASQ).

Belongs to the FliT family. Homodimer. Interacts with FliD and FlhC.

Its subcellular location is the cytoplasm. It is found in the cytosol. In terms of biological role, dual-function protein that regulates the transcription of class 2 flagellar operons and that also acts as an export chaperone for the filament-capping protein FliD. As a transcriptional regulator, acts as an anti-FlhDC factor; it directly binds FlhC, thus inhibiting the binding of the FlhC/FlhD complex to class 2 promoters, resulting in decreased expression of class 2 flagellar operons. As a chaperone, effects FliD transition to the membrane by preventing its premature polymerization, and by directing it to the export apparatus. The chain is Flagellar protein FliT from Photorhabdus laumondii subsp. laumondii (strain DSM 15139 / CIP 105565 / TT01) (Photorhabdus luminescens subsp. laumondii).